A 68-amino-acid chain; its full sequence is Beta-defensin 1 (68 aa).

The first 21 residues, Met-1 to Gly-21, serve as a signal peptide directing secretion. A propeptide spanning residues Asp-22–Ser-32 is cleaved from the precursor. Disulfide bonds link Cys-37/Cys-66, Cys-44/Cys-59, and Cys-49/Cys-67.

Belongs to the beta-defensin family. In terms of assembly, monomer. Homodimer.

The protein localises to the secreted. It localises to the membrane. In terms of biological role, has bactericidal activity. May act as a ligand for C-C chemokine receptor CCR6. Positively regulates the sperm motility and bactericidal activity in a CCR6-dependent manner. Binds to CCR6 and triggers Ca2+ mobilization in the sperm which is important for its motility. This is Beta-defensin 1 (DEFB1) from Macaca mulatta (Rhesus macaque).